The primary structure comprises 396 residues: Putative nickel insertion protein (396 aa).

This sequence belongs to the LarC family.

In Methanosarcina mazei (strain ATCC BAA-159 / DSM 3647 / Goe1 / Go1 / JCM 11833 / OCM 88) (Methanosarcina frisia), this protein is Putative nickel insertion protein.